The sequence spans 413 residues: Scarecrow-like protein 21 (413 aa).

Residues 41–413 (IVEAISRGDL…RILVSSCAWK (373 aa)) form the GRAS domain. Residues 48–108 (GDLKLVLVAC…VARLAASGSS (61 aa)) form a leucine repeat I (LRI) region. The tract at residues 127–192 (VYVLHEVCPY…GGAPNIRITG (66 aa)) is VHIID. A VHIID motif is present at residues 158 to 162 (IHIID). The leucine repeat II (LRII) stretch occupies residues 201–233 (TVKKRLEKLAKKFDVPFRFNAVSRPSCEVEVEN). The tract at residues 242–336 (LGVNFAYMLH…QHCMARDVVN (95 aa)) is PFYRE. Residues 339–413 (ACEGAERIER…RILVSSCAWK (75 aa)) are SAW.

The protein belongs to the GRAS family. Interacts with Meloidogyne incognita 16D10. As to expression, expressed in seedlings, roots, cotyledons, leaves and flowers.

It localises to the nucleus. Its function is as follows. Probable transcription factor involved in plant development. The sequence is that of Scarecrow-like protein 21 (SCL21) from Arabidopsis thaliana (Mouse-ear cress).